Here is a 207-residue protein sequence, read N- to C-terminus: Guanylate kinase (207 aa).

The region spanning 4-184 is the Guanylate kinase-like domain; the sequence is GILFIISAPS…AINDLRTIII (181 aa). 11–18 contacts ATP; it reads APSGTGKS.

It belongs to the guanylate kinase family.

The protein resides in the cytoplasm. It carries out the reaction GMP + ATP = GDP + ADP. Functionally, essential for recycling GMP and indirectly, cGMP. The protein is Guanylate kinase of Buchnera aphidicola subsp. Schizaphis graminum (strain Sg).